The primary structure comprises 429 residues: MTSDRFFRLDAGYQQYDWGKIGSSSAVAKFAAHSDPSVKIDETKPYAELWMGTHSKLPSVNHETKATLNDILAKNSQELIGEDVINKFKSTNELPFLFKVLSIEKVLSIQAHPDKELGKKLHMEDPKNYPDDNHKPEMAVAITEFEGFCGFKPLEEIADELETIPEFRDVVGDEVANEFIQNYKTGVENSSSACANNKKLLQKVFEKVMTAPCDILEKNADGMAKRANENPSSFKSSDLPELVVRLNRQFPKDVGLFCGCLMLNHCKLQPGQALFLEAKDPHAYICGDIIECMAASDNVVRAGFTPKFKDVKNLVEMLTYRYDPVEKQVMSAEEFPRAGGDGATIMYNPPIAEFSVLETTFKNKTGKATVEGLKGPSIVITTAGEGYISADGQKLKAEPGFVFFIGANVPVELETTDKDFTTYRAFVEA.

Gln110, His112, Glu137, and His282 together coordinate Zn(2+). The active site involves Arg301.

This sequence belongs to the mannose-6-phosphate isomerase type 1 family. Requires Zn(2+) as cofactor.

The protein localises to the cytoplasm. The catalysed reaction is D-mannose 6-phosphate = D-fructose 6-phosphate. Its pathway is nucleotide-sugar biosynthesis; GDP-alpha-D-mannose biosynthesis; alpha-D-mannose 1-phosphate from D-fructose 6-phosphate: step 1/2. In terms of biological role, involved in the synthesis of the GDP-mannose and dolichol-phosphate-mannose required for a number of critical mannosyl transfer reactions. The sequence is that of Mannose-6-phosphate isomerase (PMI1) from Candida glabrata (strain ATCC 2001 / BCRC 20586 / JCM 3761 / NBRC 0622 / NRRL Y-65 / CBS 138) (Yeast).